The following is a 279-amino-acid chain: MEAVVNLYHELMKHADPRIQSYPLMGSPLLITSILLTYVYFILSLGPRIMANRKPFQLRGFMIVYNFSLVILSLYIVYEFLMSGWLSTYTWRCDPIDFSNSPEALRMVRVAWLFMLSKVIELMDTVIFILRKKDGQVTFLHVFHHSVLPWSWWWGIKIAPGGMGSFHAMINSSVHVVMYLYYGLSALGPVAQPYLWWKKHMTAIQLIQFVLVSLHISQYYFMPSCNYQYPIIIHLIWMYGTIFFILFSNFWYHSYTKGKRLPRAVQQNGAPATTKVKAN.

Residue M1 is modified to N-acetylmethionine. Helical transmembrane passes span 23 to 43, 61 to 81, 110 to 130, 137 to 154, 176 to 196, 203 to 223, and 231 to 251; these read PLMG…YFIL, FMIV…YEFL, VAWL…IFIL, VTFL…SWWW, VVMY…PYLW, AIQL…YFMP, and IIIH…SNFW. Positions 275–279 match the Di-lysine motif motif; sequence KVKAN.

Belongs to the ELO family. ELOVL1 subfamily. In terms of assembly, interacts with LASS2, TECR and HSD17B12. Interacts with TECR. In terms of tissue distribution, expressed in a broad variety of tissues. Highly expressed in stomach, lung, kidney, skin and intestine. Moderately expressed in white adipose tissue, liver, spleen, brain, brown adipose tissue, heart and muscle. Weakly expressed in testis.

The protein resides in the endoplasmic reticulum membrane. The enzyme catalyses a very-long-chain acyl-CoA + malonyl-CoA + H(+) = a very-long-chain 3-oxoacyl-CoA + CO2 + CoA. It catalyses the reaction eicosanoyl-CoA + malonyl-CoA + H(+) = 3-oxodocosanoyl-CoA + CO2 + CoA. The catalysed reaction is docosanoyl-CoA + malonyl-CoA + H(+) = 3-oxotetracosanoyl-CoA + CO2 + CoA. It carries out the reaction tetracosanoyl-CoA + malonyl-CoA + H(+) = 3-oxohexacosanoyl-CoA + CO2 + CoA. The enzyme catalyses (11Z)-eicosenoyl-CoA + malonyl-CoA + H(+) = 3-oxo-(13Z)-docosenoyl-CoA + CO2 + CoA. It catalyses the reaction (13Z)-docosenoyl-CoA + malonyl-CoA + H(+) = 3-oxo-(15Z)-tetracosenoyl-CoA + CO2 + CoA. It functions in the pathway lipid metabolism; fatty acid biosynthesis. Functionally, catalyzes the first and rate-limiting reaction of the four reactions that constitute the long-chain fatty acids elongation cycle. This endoplasmic reticulum-bound enzymatic process allows the addition of 2 carbons to the chain of long- and very long-chain fatty acids (VLCFAs) per cycle. Condensing enzyme that exhibits activity toward saturated and monounsaturated acyl-CoA substrates, with the highest activity towards C22:0 acyl-CoA. May participate in the production of both saturated and monounsaturated VLCFAs of different chain lengths that are involved in multiple biological processes as precursors of membrane lipids and lipid mediators. Important for saturated C24:0 and monounsaturated C24:1 sphingolipid synthesis. Indirectly inhibits RPE65 via production of VLCFAs. The chain is Very long chain fatty acid elongase 1 from Mus musculus (Mouse).